The primary structure comprises 179 residues: Large ribosomal subunit protein uL5 (179 aa).

It belongs to the universal ribosomal protein uL5 family. In terms of assembly, part of the 50S ribosomal subunit; part of the 5S rRNA/L5/L18/L25 subcomplex. Contacts the 5S rRNA and the P site tRNA. Forms a bridge to the 30S subunit in the 70S ribosome.

Its function is as follows. This is one of the proteins that bind and probably mediate the attachment of the 5S RNA into the large ribosomal subunit, where it forms part of the central protuberance. In the 70S ribosome it contacts protein S13 of the 30S subunit (bridge B1b), connecting the 2 subunits; this bridge is implicated in subunit movement. Contacts the P site tRNA; the 5S rRNA and some of its associated proteins might help stabilize positioning of ribosome-bound tRNAs. The sequence is that of Large ribosomal subunit protein uL5 from Nitratidesulfovibrio vulgaris (strain ATCC 29579 / DSM 644 / CCUG 34227 / NCIMB 8303 / VKM B-1760 / Hildenborough) (Desulfovibrio vulgaris).